The sequence spans 449 residues: Exodeoxyribonuclease 7 large subunit (449 aa).

The protein belongs to the XseA family. Heterooligomer composed of large and small subunits.

The protein localises to the cytoplasm. It carries out the reaction Exonucleolytic cleavage in either 5'- to 3'- or 3'- to 5'-direction to yield nucleoside 5'-phosphates.. Bidirectionally degrades single-stranded DNA into large acid-insoluble oligonucleotides, which are then degraded further into small acid-soluble oligonucleotides. The protein is Exodeoxyribonuclease 7 large subunit of Salmonella dublin (strain CT_02021853).